Reading from the N-terminus, the 92-residue chain is Probable Fe(2+)-trafficking protein (92 aa).

The protein belongs to the Fe(2+)-trafficking protein family.

Functionally, could be a mediator in iron transactions between iron acquisition and iron-requiring processes, such as synthesis and/or repair of Fe-S clusters in biosynthetic enzymes. In Shewanella sp. (strain ANA-3), this protein is Probable Fe(2+)-trafficking protein.